A 64-amino-acid polypeptide reads, in one-letter code: uncharacterized protein (64 aa).

As to expression, widely expressed; not found in breast.

This is an uncharacterized protein from Homo sapiens (Human).